The sequence spans 399 residues: MSDILSINDLELNGAKVFIRCDFNVPMDEFLNITDDRRIRSAIPTIRYCLDNGCSVVLASHLGRPKNGYEEKFSLQGVAKRLSRLLDREVIFAEDVIGNDAKTKAEALKAGEILMIENLRFEKGETKNDEALAKELSEFGEFYINDAFGVCHRAHSSVEAITKFYDEKHKAAGFLLQKEINFAQNLIKHPSRPFVAVVGGSKVSGKLQALHNLLPRVDKLIIGGGMAFTFLKSLGENIGNSLLEEELIEDARQILQKGKELGVKIYLPVDVVAAQTFSAESAVKYVPAQEIPNGWMGLDIGPASIRLFKEVIADAQTIWWNGPMGVFEMDKFSKGSIKMSHAIIDTHATTVVGGGDTADVVERAGDADEMTFISTGGGASLELIEGKELPGIKPLRKEE.

Substrate-binding positions include 22–24 (DFN), Arg38, 61–64 (HLGR), Arg120, and Arg153. ATP-binding positions include Lys206, Gly297, Glu328, and 354–357 (GGDT).

The protein belongs to the phosphoglycerate kinase family. As to quaternary structure, monomer.

It localises to the cytoplasm. The enzyme catalyses (2R)-3-phosphoglycerate + ATP = (2R)-3-phospho-glyceroyl phosphate + ADP. The protein operates within carbohydrate degradation; glycolysis; pyruvate from D-glyceraldehyde 3-phosphate: step 2/5. The polypeptide is Phosphoglycerate kinase (Campylobacter concisus (strain 13826)).